The chain runs to 158 residues: NAD(P)H-quinone oxidoreductase subunit J, chloroplastic (158 aa).

Belongs to the complex I 30 kDa subunit family. NDH is composed of at least 16 different subunits, 5 of which are encoded in the nucleus.

It is found in the plastid. The protein resides in the chloroplast thylakoid membrane. The enzyme catalyses a plastoquinone + NADH + (n+1) H(+)(in) = a plastoquinol + NAD(+) + n H(+)(out). It carries out the reaction a plastoquinone + NADPH + (n+1) H(+)(in) = a plastoquinol + NADP(+) + n H(+)(out). Functionally, NDH shuttles electrons from NAD(P)H:plastoquinone, via FMN and iron-sulfur (Fe-S) centers, to quinones in the photosynthetic chain and possibly in a chloroplast respiratory chain. The immediate electron acceptor for the enzyme in this species is believed to be plastoquinone. Couples the redox reaction to proton translocation, and thus conserves the redox energy in a proton gradient. The polypeptide is NAD(P)H-quinone oxidoreductase subunit J, chloroplastic (Fagopyrum esculentum subsp. ancestrale (Wild buckwheat)).